A 158-amino-acid polypeptide reads, in one-letter code: Cytochrome b6-f complex subunit 4 (158 aa).

The next 3 helical transmembrane spans lie at Leu34–Val54, Leu93–Glu113, and Thr129–Ile149.

The protein belongs to the cytochrome b family. PetD subfamily. In terms of assembly, the 4 large subunits of the cytochrome b6-f complex are cytochrome b6, subunit IV (17 kDa polypeptide, petD), cytochrome f and the Rieske protein, while the 4 small subunits are petG, petL, petM and petN. The complex functions as a dimer.

The protein resides in the plastid. The protein localises to the chloroplast thylakoid membrane. Its function is as follows. Component of the cytochrome b6-f complex, which mediates electron transfer between photosystem II (PSII) and photosystem I (PSI), cyclic electron flow around PSI, and state transitions. The polypeptide is Cytochrome b6-f complex subunit 4 (Liriodendron tulipifera (Tuliptree)).